Consider the following 118-residue polypeptide: Ribonuclease P protein component (118 aa).

It belongs to the RnpA family. In terms of assembly, consists of a catalytic RNA component (M1 or rnpB) and a protein subunit.

It carries out the reaction Endonucleolytic cleavage of RNA, removing 5'-extranucleotides from tRNA precursor.. Its function is as follows. RNaseP catalyzes the removal of the 5'-leader sequence from pre-tRNA to produce the mature 5'-terminus. It can also cleave other RNA substrates such as 4.5S RNA. The protein component plays an auxiliary but essential role in vivo by binding to the 5'-leader sequence and broadening the substrate specificity of the ribozyme. This chain is Ribonuclease P protein component, found in Rickettsia akari (strain Hartford).